A 182-amino-acid chain; its full sequence is Triplatin (182 aa).

A signal peptide spans 1–18 (MKMIIAVTFLGIVTIAFA). Cystine bridges form between Cys-21-Cys-133, Cys-55-Cys-177, and Cys-88-Cys-105.

Belongs to the calycin superfamily. Triabin family. Expressed in salivary glands.

The protein resides in the secreted. Inhibits platelet aggregation and vasoconstriction through binding to distinct eicosanoids involved in inflammation (acts as a scavenger), and has a role in inhibiting host innate immunity by impairing platelet-assisted formation of neutrophil extracellular traps (NETs). Inhibits platelet aggregation by collagen, and low doses of thromboxane A2 mimetic (TXA2 mimetic), and arachidonic acid (AA) without affecting aggregation induced by ADP, convulxin (GP6 agonist), and PMA. Binds to TXA2, TXB2, prostaglandine H2 mimetic (PGH2 mimetic), PGJ2, and PGF2alpha. Binding is not observed to leukotrienes, AA, and biogenic amines (PGE1, 5(S)-HETE, 12(S)-HETE, 20-HETE, norepinephrine, epinephrine, serotonin, LTC4 and ADP). Induces relaxation of aorta rat previously contracted with TXA2 mimetic. Moreover, it also impairs platelet-assisted formation of neutrophil extracellular traps (NETs). NETs are web-like structures of DNA and proteins that play an important role in killing of pathogens. In addition, NETs are implicated in thrombus formation. In vivo, this protein exhibits antithrombotic activity in two distinct mice models that are highly dependent on platelets. It is noteworthy that it inhibits thrombosis without promoting excessive bleeding. In Triatoma infestans (Assassin bug), this protein is Triplatin.